We begin with the raw amino-acid sequence, 213 residues long: Orotidine 5'-phosphate decarboxylase (213 aa).

Substrate-binding positions include aspartate 6, lysine 25, 52–61 (DLKLADIDNT), serine 109, 158–168 (PGVGAQGAMIG), glycine 181, and arginine 182. Lysine 54 functions as the Proton donor in the catalytic mechanism.

It belongs to the OMP decarboxylase family. Type 1 subfamily. In terms of assembly, homodimer.

The catalysed reaction is orotidine 5'-phosphate + H(+) = UMP + CO2. It participates in pyrimidine metabolism; UMP biosynthesis via de novo pathway; UMP from orotate: step 2/2. Its function is as follows. Catalyzes the decarboxylation of orotidine 5'-monophosphate (OMP) to uridine 5'-monophosphate (UMP). This Sulfurisphaera tokodaii (strain DSM 16993 / JCM 10545 / NBRC 100140 / 7) (Sulfolobus tokodaii) protein is Orotidine 5'-phosphate decarboxylase.